The chain runs to 297 residues: Bax inhibitor 1 (297 aa).

The Lumenal portion of the chain corresponds to 1 to 53; it reads MSGPPPPYEEQSSHLYGQPASSQDGNAFIPEDFKYSTVVISCEPIIRQRFMHK. A helical transmembrane segment spans residues 54–74; it reads VYSLLSCQLLASLSFCYWASV. The Cytoplasmic segment spans residues 75–85; that stretch reads STSLQNFIMSH. A helical transmembrane segment spans residues 86–106; sequence IALFYICMVVSLVSCIWLAVS. Residues 107 to 146 lie on the Lumenal side of the membrane; the sequence is PRPEDYEASVPEPLLTGSSEEPAQEQRRLPWYVLSSYKQK. Residues 147 to 167 form a helical membrane-spanning segment; sequence LTLLSIFTLSEAYCLSLVTLA. The Cytoplasmic portion of the chain corresponds to 168-171; sequence YDKD. A helical transmembrane segment spans residues 172-192; the sequence is TVLSALLITTIVVVGVSLTAL. Residues 193-208 are Lumenal-facing; it reads SERFENVLNSATSIYY. Residues 209–229 traverse the membrane as a helical segment; that stretch reads WLNWGLWIMIGMGLTALLFGW. Residues 230–239 are Cytoplasmic-facing; the sequence is NTHSSKFNLL. The helical transmembrane segment at 240 to 260 threads the bilayer; it reads YGWLGAILFTAYLFIDTQLIF. Residues 261 to 270 are Lumenal-facing; it reads RKVYPDEEVR. The chain crosses the membrane as a helical span at residues 271-291; sequence CAMMLYLDIVNLFLSILRILA. Over 292 to 297 the chain is Cytoplasmic; it reads NSNDDN.

This sequence belongs to the BI1 family. LFG subfamily.

The protein resides in the endoplasmic reticulum membrane. Its subcellular location is the vacuole membrane. It is found in the mitochondrion membrane. Its function is as follows. Links the unfolded protein response and programmed cell death and mediates mitochondrial-dependent apoptosis. Induces cell death and disruption of the mitochondrial transmembrane potential via the mitochondrial phosphate carrier MIR1. Dispensible for starvation-induced autophagy. The chain is Bax inhibitor 1 (BXI1) from Saccharomyces cerevisiae (strain ATCC 204508 / S288c) (Baker's yeast).